A 404-amino-acid polypeptide reads, in one-letter code: Tryptophan synthase beta chain (404 aa).

Lys98 carries the N6-(pyridoxal phosphate)lysine modification.

The protein belongs to the TrpB family. In terms of assembly, tetramer of two alpha and two beta chains. It depends on pyridoxal 5'-phosphate as a cofactor.

It carries out the reaction (1S,2R)-1-C-(indol-3-yl)glycerol 3-phosphate + L-serine = D-glyceraldehyde 3-phosphate + L-tryptophan + H2O. It participates in amino-acid biosynthesis; L-tryptophan biosynthesis; L-tryptophan from chorismate: step 5/5. In terms of biological role, the beta subunit is responsible for the synthesis of L-tryptophan from indole and L-serine. In Rhodopseudomonas palustris (strain BisB18), this protein is Tryptophan synthase beta chain.